The primary structure comprises 226 residues: UPF0319 protein SO_1816 (226 aa).

Positions 1–21 are cleaved as a signal peptide; sequence MKSLLPISSLLVLLGSASVSA.

Belongs to the UPF0319 family.

The chain is UPF0319 protein SO_1816 from Shewanella oneidensis (strain ATCC 700550 / JCM 31522 / CIP 106686 / LMG 19005 / NCIMB 14063 / MR-1).